Reading from the N-terminus, the 369-residue chain is Putative cyclin-F1-1 (369 aa).

Residues 328 to 350 (AQHHLESKPAGAAGVGINSSGDD) form a disordered region.

It belongs to the cyclin family. Cyclin F subfamily.

This is Putative cyclin-F1-1 (CYCF1-1) from Oryza sativa subsp. japonica (Rice).